Here is a 498-residue protein sequence, read N- to C-terminus: MRFTLTRWCLTLFIFLNRPLPVLPDSADGAHTPTLEPEPFLYILGKQRMLEAQHRCYDRMQKLPPYQGEGLYCNRTWDGWSCWDDTPAGVLAEQYCPDYFPDFDAAEKVTKYCGEDGDWYRHPESNISWSNYTMCNAFTPDKLQNAYILYYLAIVGHSLSILTLLISLGIFMFLRYFNLLAPFNALLYPTRSISCQRVTLHKNMFLTYVLNSIIIIVHLVVIVPNGELVKRDPPICKVLHFFHQYMMSCNYFWMLCEGVYLHTLIVVSVFAEGQRLWWYHVLGWGFPLIPTTAHAITRAVLFNDNCWLSVDTNLLYIIHGPVMAALVVNFFFLLNILRVLVKKLKESQEAESHMYLKAVRATLILVPLLGVQFVVLPWRPSTPLLGKIYDYVVHSLIHFQGFFVAIIYCFCNHEVQGALKRQWNQYQAQRWAGRRSTRAANAAAATAAAAAALAETVEIPVYICHQEPREEPAGEEPVVEVEGVEVIAMEVLEQETSA.

The N-terminal stretch at 1-29 (MRFTLTRWCLTLFIFLNRPLPVLPDSADG) is a signal peptide. Over 30-147 (AHTPTLEPEP…FTPDKLQNAY (118 aa)) the chain is Extracellular. 3 cysteine pairs are disulfide-bonded: cysteine 56-cysteine 82, cysteine 73-cysteine 113, and cysteine 96-cysteine 135. N-linked (GlcNAc...) asparagine glycans are attached at residues asparagine 74, asparagine 126, and asparagine 131. A helical transmembrane segment spans residues 148 to 170 (ILYYLAIVGHSLSILTLLISLGI). Topologically, residues 171-198 (FMFLRYFNLLAPFNALLYPTRSISCQRV) are cytoplasmic. Residues 199–219 (TLHKNMFLTYVLNSIIIIVHL) traverse the membrane as a helical segment. Topologically, residues 220-236 (VVIVPNGELVKRDPPIC) are extracellular. Cysteine 236 and cysteine 306 are joined by a disulfide. The helical transmembrane segment at 237 to 259 (KVLHFFHQYMMSCNYFWMLCEGV) threads the bilayer. At 260 to 276 (YLHTLIVVSVFAEGQRL) the chain is on the cytoplasmic side. A helical membrane pass occupies residues 277 to 297 (WWYHVLGWGFPLIPTTAHAIT). The Extracellular portion of the chain corresponds to 298-313 (RAVLFNDNCWLSVDTN). A helical membrane pass occupies residues 314 to 337 (LLYIIHGPVMAALVVNFFFLLNIL). At 338-357 (RVLVKKLKESQEAESHMYLK) the chain is on the cytoplasmic side. A helical membrane pass occupies residues 358-376 (AVRATLILVPLLGVQFVVL). Residues 377 to 384 (PWRPSTPL) lie on the Extracellular side of the membrane. Residues 385–411 (LGKIYDYVVHSLIHFQGFFVAIIYCFC) traverse the membrane as a helical segment. Over 412–498 (NHEVQGALKR…MEVLEQETSA (87 aa)) the chain is Cytoplasmic.

The protein belongs to the G-protein coupled receptor 2 family. As to quaternary structure, heterodimer of CALCR and RAMP1, RAMP2 or RAMP3; the receptor complexes function as AMYR1, AMYR2 and AMYR3 receptors, respectively, and respond to amylin/IAPP, calcitonin/CT and CGRP1 ligands. Interacts with GPRASP2.

The protein resides in the cell membrane. Its function is as follows. G protein-coupled receptor activated by ligand peptides amylin (IAPP), calcitonin (CT/CALCA) and calcitonin gene-related peptide type 1 (CGRP1/CALCA). CALCR interacts with receptor-activity-modifying proteins RAMP1, 2 and 3 to form receptor complexes AMYR1, 2 and 3, respectively. IAPP, CT and CGRP1 activate CALCR and AMYRs with distinct modes of receptor activation resulting in specific phenotypes. Ligand binding causes a conformation change that triggers signaling via guanine nucleotide-binding proteins (G proteins) and modulates the activity of downstream effectors. Activates cAMP-dependent pathway. The sequence is that of Calcitonin receptor from Sus scrofa (Pig).